Reading from the N-terminus, the 217-residue chain is MPITKATPLFLRYRLKGFVFLTLLLVQGVFTACAPAVPVNNKSVSAVQPEDKQALKPDPALGEYTSDLKFNTNFIPKKDDPFRPFYDLSFTLQFQDPYTATYGTGWLIDWKDNNQPNKFTAYIATNLHVADNLRNVNDYEFFNQFDYFDDPTESFTLGKFVDGNEIKQIVPDAMHEPSLVRIETSKLPKTAYTTTLFINDLGEYRLPAADFAVLESI.

A signal peptide spans 1-32 (MPITKATPLFLRYRLKGFVFLTLLLVQGVFTA). C33 carries the N-palmitoyl cysteine lipid modification. Residue C33 is the site of S-diacylglycerol cysteine attachment.

This sequence belongs to the MG067/MG068/MG395 family.

It localises to the cell membrane. This is an uncharacterized protein from Mycoplasma pneumoniae (strain ATCC 29342 / M129 / Subtype 1) (Mycoplasmoides pneumoniae).